Consider the following 7182-residue polypeptide: Replicase polyprotein 1ab (7182 aa).

The region spanning 25–151 (RTDHVSLKAS…EFQFLLRKKG (127 aa)) is the CoV Nsp1 globular domain. The BetaCoV Nsp1 C-terminal domain maps to 159 to 195 (DAPWDYNWTPYSDLMDALEADPCGKYSQSLLKKLVGG). A CoV Nsp2 N-terminal domain is found at 197–473 (FTPIDQYMCG…WSKVCETANL (277 aa)). Zn(2+) contacts are provided by cysteine 340, cysteine 343, cysteine 359, and cysteine 361. The interval 340–361 (CTSCGKGSWLTGNAVQGFACDC) is C4. Positions 479–713 (QHAINFVNEF…MHILSKAMQL (235 aa)) constitute a CoV Nsp2 middle domain. A CoV Nsp2 C-terminal domain is found at 715-851 (HTTVSWAGSK…VPTLFRLKGG (137 aa)). Positions 855–964 (KGVKFGGEQT…MTFSVNPVEE (110 aa)) constitute a Ubiquitin-like 1 domain. Macro domains are found at residues 1186–1345 (PLKN…KVYN) and 1354–1480 (TGLT…AVQT). The DPUP domain occupies 1480-1553 (TPEQSFINTV…LEKCRTYLTS (74 aa)). Residues 1558 to 1613 (QKNVDVLVTIDGVNFRTVVLNNTTTYRVQLGSVFYKGSDISDTIPTEKMSGEAVYL) form the Ubiquitin-like 2 domain. The region spanning 1628-1902 (VYGTADTAFL…WADVDPDLSA (275 aa)) is the Peptidase C16 domain. The active-site For PL-PRO activity is the cysteine 1668. 4 residues coordinate Zn(2+): cysteine 1748, cysteine 1751, cysteine 1783, and cysteine 1785. The segment at 1748-1785 (CNVCGVQDTTTTGLKACIYVGMNSLDELHATHEECCQC) adopts a C4-type zinc-finger fold. Residues histidine 1838 and aspartate 1853 each act as for PL-PRO activity in the active site. Residues 1916–2033 (VIEYSPATIL…QVYDIAPVTL (118 aa)) enclose the Nucleic acid-binding domain. Residues 2059–2179 (PQSPVQVAED…ASVTVNVTTA (121 aa)) form the G2M domain. 3 helical membrane-spanning segments follow: residues 2158-2178 (ILLG…NVTT), 2196-2216 (GIIG…FTFW), and 2268-2288 (LLFL…LFLF). An HD1 region spans residues 2158 to 2441 (ILLGASSLFA…VTHIPLLGLV (284 aa)). The 3Ecto domain maps to 2305-2371 (LATYRELRSY…FQMIQTHVTS (67 aa)). Disulfide bonds link cysteine 2321–cysteine 2349 and cysteine 2339–cysteine 2346. Helical transmembrane passes span 2372 to 2392 (YVIN…YVLY), 2396 to 2416 (FNVL…GAFV), and 2421 to 2441 (YNYL…LGLV). Residues 2455 to 2545 (RFYNHVINGC…SLRRLVKPTD (91 aa)) form a Y1 region. A CoV Nsp3 Y domain is found at 2455 to 2828 (RFYNHVINGC…LSVKFSATKL (374 aa)). Residues histidine 2459, cysteine 2464, cysteine 2469, cysteine 2472, cysteine 2505, histidine 2508, cysteine 2512, and cysteine 2515 each coordinate Zn(2+). Residues 2459-2472 (HVINGCKDTACLLC) form a ZF1 region. The ZF2 stretch occupies residues 2505–2515 (CCRHNWNCVDC). The tract at residues 2546–2644 (KSHYYVESVT…LVDSNMVTTV (99 aa)) is Y2. Positions 2546-2828 (KSHYYVESVT…LSVKFSATKL (283 aa)) are coV-Y. Residues 2645–2727 (GDSREIASKM…DALQYAYKHD (83 aa)) form a Y3 region. Residues 2728-2828 (LQLTTEGFNN…LSVKFSATKL (101 aa)) form a Y4 region. A run of 4 helical transmembrane segments spans residues 2848 to 2868 (CVVT…LPAF), 3119 to 3139 (STSL…FYYV), 3152 to 3172 (CAVV…FVVS), and 3203 to 3223 (WFVM…IVGV). The HD2 stretch occupies residues 2848–3223 (CVVTLVVFAM…WMVFAYIVGV (376 aa)). The region spanning 3242-3338 (VFTDGKLNCS…NCSVTSSVLQ (97 aa)) is the Nsp4C domain. The Peptidase C30 domain occupies 3339-3644 (SGLVKMAAPS…NMQVMGVVMQ (306 aa)). Active-site for 3CL-PRO activity residues include histidine 3379 and cysteine 3486. 7 consecutive transmembrane segments (helical) span residues 3650–3670 (ISYG…VATL), 3684–3704 (VIPL…MLTV), 3709–3729 (TFLT…NIVY), 3760–3777 (LGVY…VRRL), 3782–3802 (ASNL…YTTG), 3823–3843 (VTVF…FLYA), and 3855–3875 (LVLL…GVFS). The segment at 3650–3875 (ISYGLVHWLF…FCTVYFGVFS (226 aa)) is HD3. The RdRp Nsp7 cofactor domain occupies 3937–4019 (SKLTDLKCTS…DLLDHPSVLQ (83 aa)). The region spanning 4020 to 4218 (ATLSEFSHLA…RAASSAVTLQ (199 aa)) is the RdRp Nsp8 cofactor domain. In terms of domain architecture, Nsp9 ssRNA-binding spans 4219–4328 (NNEIRPSGLK…GHIAATVRLQ (110 aa)). Residues 4329–4467 (AGSNTEFAIN…DALRGTTIPQ (139 aa)) enclose the ExoN/MTase coactivator domain. Residues cysteine 4402, cysteine 4405, histidine 4411, cysteine 4418, cysteine 4444, cysteine 4447, cysteine 4455, and cysteine 4457 each contribute to the Zn(2+) site. Zinc fingers lie at residues 4402–4418 (CLYC…TGVC) and 4444–4457 (CNVC…GCNC). The region spanning 4473-4730 (FLNRVRGSIV…AAETHRDCDL (258 aa)) is the NiRAN domain. Asparagine 4678 and aspartate 4687 together coordinate Mn(2+). The 99-residue stretch at 4735–4833 (IEWPLLEYDY…MNMDVSLHRH (99 aa)) folds into the Nsp12 Interface domain. Histidine 4764, cysteine 4770, cysteine 4775, cysteine 4779, and cysteine 4956 together coordinate Zn(2+). In terms of domain architecture, Nsp12 RNA-dependent RNA polymerase spans 4834–5401 (RLSLKELMMY…DLYTAPTTLQ (568 aa)). The rdRp Fingers N-ter stretch occupies residues 4836–5050 (SLKELMMYAA…HQKMLKSMAA (215 aa)). The interval 5051-5089 (TRGSTCVIGTTKFYGGWDFMLKTLYKDVDNPHLMGWDYP) is rdRp Palm N-ter. Residues 5081–5243 (PHLMGWDYPK…CYNSDYATKG (163 aa)) enclose the RdRp catalytic domain. The interval 5090–5148 (KCDRAMPNMCRIFASLILARKHSTCCTNTDRFYRLANECAQVLSEYVLCGGGYYVKPGG) is rdRp Fingers C-ter. Residues histidine 5111, cysteine 5114, and cysteine 5115 each coordinate Zn(2+). A rdRp Palm C-ter region spans residues 5149–5284 (TSSGDATTAY…KKGPHEFCSQ (136 aa)). Catalysis depends on residues serine 5228, aspartate 5229, and aspartate 5230. Residues 5285–5401 (HTLFIKDGDD…DLYTAPTTLQ (117 aa)) are rdRp Thumb. One can recognise a CV ZBD domain in the interval 5402–5514 (AVGSCVVCHS…TEFNRLATCD (113 aa)). Positions 5406, 5409, 5417, 5420, 5427, 5430, 5434, 5440, 5451, 5456, 5473, and 5476 each coordinate Zn(2+). One can recognise a (+)RNA virus helicase ATP-binding domain in the interval 5658-5839 (TVPEEFANHV…MCNLGPDIFL (182 aa)). Residue 5683 to 5690 (GPPGTGKS) coordinates ATP. The region spanning 5840–6014 (SVCYRCPEEI…GLYKDCSRES (175 aa)) is the (+)RNA virus helicase C-terminal domain. Residues 6071-6286 (LFITRDEAIR…RCLAIHDCFI (216 aa)) enclose the ExoN domain. Active-site residues include aspartate 6089, glutamate 6091, and glutamate 6190. The Zn(2+) site is built by cysteine 6206, cysteine 6209, cysteine 6225, histidine 6228, histidine 6256, cysteine 6260, and histidine 6263. Active-site residues include histidine 6267 and aspartate 6272. Cysteine 6278 contacts Zn(2+). Residues 6295–6523 (YPYISHEKRL…NLWSTFTKIQ (229 aa)) enclose the N7-MTase domain. 6330–6336 (DIGNPKG) contacts S-adenosyl-L-methionine. The segment at 6409-6423 (CDGGSLYVNKHAFHT) is gpppA-binding. Residues cysteine 6447, cysteine 6469, cysteine 6480, and histidine 6483 each contribute to the Zn(2+) site. The Nsp15 N-terminal oligomerization domain occupies 6524–6584 (GLENIAYNVI…NIAFELYAKR (61 aa)). One can recognise an AV-Nsp11N/CoV-Nsp15M domain in the interval 6585–6715 (AVRSHPDFNL…IYKKVNNEFV (131 aa)). One can recognise a NendoU domain in the interval 6732–6871 (TPVSEMEKDF…KDGQVQTFYP (140 aa)). Residues histidine 6762, histidine 6777, lysine 6817, lysine 6920, aspartate 7004, lysine 7044, and glutamate 7077 contribute to the active site. A Nidovirus-type SAM-dependent 2'-O-MTase domain is found at 6876 to 7170 (INDWKPGLAM…TLSVSTDVLV (295 aa)).

This sequence belongs to the coronaviruses polyprotein 1ab family. In terms of assembly, interacts with host PHB and PHB2. Interacts with papain-like protease nsp3 and non-structural protein 6. As to quaternary structure, monomer. Homodimer. Only the homodimer shows catalytic activity. In terms of assembly, interacts with nsp8 and nsp12 to form the replication-transcription complex (RTC): nsp12, nsp7, two subunits of nsp8, and up to two subunits of nsp13. Interacts with nsp7, nsp13 and nsp12 to form the replication-transcription complex (RTC): nsp12, nsp7, two subunits of nsp8, and up to two subunits of nsp13. As to quaternary structure, interacts with nsp12. In terms of assembly, interacts with proofreading exoribonuclease nsp14 and 2'-O-methyltransferase nsp16; these interactions enhance nsp14 and nsp16 enzymatic activities. Interacts with nsp7 and nsp8 to form the replication-transcription complex (RTC): nsp12, nsp7, two subunits of nsp8, and up to two subunits of nsp13. Interacts with nsp9. As to quaternary structure, interacts with nsp8 to form the replication-transcription complex (RTC): nsp12, nsp7, two subunits of nsp8, and up to two subunits of nsp13. The cofactor is Mn(2+). Requires Mg(2+) as cofactor. Post-translationally, specific enzymatic cleavages in vivo by its own proteases yield mature proteins. 3CL-PRO and PL-PRO proteinases are autocatalytically processed.

The protein localises to the host membrane. Its subcellular location is the host cytoplasm. It is found in the host perinuclear region. It localises to the host endoplasmic reticulum-Golgi intermediate compartment. The enzyme catalyses RNA(n) + a ribonucleoside 5'-triphosphate = RNA(n+1) + diphosphate. It catalyses the reaction ATP + H2O = ADP + phosphate + H(+). The catalysed reaction is Thiol-dependent hydrolysis of ester, thioester, amide, peptide and isopeptide bonds formed by the C-terminal Gly of ubiquitin (a 76-residue protein attached to proteins as an intracellular targeting signal).. It carries out the reaction a 5'-end (N(7)-methyl 5'-triphosphoguanosine)-ribonucleoside in mRNA + S-adenosyl-L-methionine = a 5'-end (N(7)-methyl 5'-triphosphoguanosine)-(2'-O-methyl-ribonucleoside) in mRNA + S-adenosyl-L-homocysteine + H(+). The enzyme catalyses uridylyl-uridylyl-ribonucleotide-RNA = a 3'-end uridylyl-2',3'-cyclophospho-uridine-RNA + a 5'-end dephospho-ribonucleoside-RNA. It catalyses the reaction a 5'-end diphospho-ribonucleoside in mRNA + GTP + H(+) = a 5'-end (5'-triphosphoguanosine)-ribonucleoside in mRNA + diphosphate. The catalysed reaction is a 5'-end (5'-triphosphoguanosine)-ribonucleoside in mRNA + S-adenosyl-L-methionine = a 5'-end (N(7)-methyl 5'-triphosphoguanosine)-ribonucleoside in mRNA + S-adenosyl-L-homocysteine. In terms of biological role, the replicase polyprotein of coronaviruses is a multifunctional protein: it contains the activities necessary for the transcription of negative stranded RNA, leader RNA, subgenomic mRNAs and progeny virion RNA as well as proteinases responsible for the cleavage of the polyprotein into functional products. Functionally, inhibits host translation by interacting with the 40S ribosomal subunit. The nsp1-40S ribosome complex further induces an endonucleolytic cleavage near the 5'UTR of host mRNAs, targeting them for degradation. Viral mRNAs are not susceptible to nsp1-mediated endonucleolytic RNA cleavage thanks to the presence of a 5'-end leader sequence and are therefore protected from degradation. By suppressing host gene expression, nsp1 facilitates efficient viral gene expression in infected cells and evasion from host immune response. Its function is as follows. May play a role in the modulation of host cell survival signaling pathway by interacting with host PHB and PHB2. Indeed, these two proteins play a role in maintaining the functional integrity of the mitochondria and protecting cells from various stresses. Responsible for the cleavages located at the N-terminus of the replicase polyprotein. In addition, PL-PRO possesses a deubiquitinating/deISGylating activity and processes both 'Lys-48'- and 'Lys-63'-linked polyubiquitin chains from cellular substrates. Participates together with nsp4 in the assembly of virally-induced cytoplasmic double-membrane vesicles necessary for viral replication. Antagonizes innate immune induction of type I interferon by blocking the phosphorylation, dimerization and subsequent nuclear translocation of host IRF3. Also prevents host NF-kappa-B signaling. In terms of biological role, participates in the assembly of virally-induced cytoplasmic double-membrane vesicles necessary for viral replication. Functionally, cleaves the C-terminus of replicase polyprotein at 11 sites. Recognizes substrates containing the core sequence [ILMVF]-Q-|-[SGACN]. Also able to bind an ADP-ribose-1''-phosphate (ADRP). Its function is as follows. Plays a role in the initial induction of autophagosomes from host endoplasmic reticulum. Later, limits the expansion of these phagosomes that are no longer able to deliver viral components to lysosomes. Forms a hexadecamer with nsp8 (8 subunits of each) that may participate in viral replication by acting as a primase. Alternatively, may synthesize substantially longer products than oligonucleotide primers. In terms of biological role, forms a hexadecamer with nsp7 (8 subunits of each) that may participate in viral replication by acting as a primase. Alternatively, may synthesize substantially longer products than oligonucleotide primers. Functionally, forms a primer, NSP9-pU, which is utilized by the polymerase for the initiation of RNA chains. Interacts with ribosome signal recognition particle RNA (SRP). Together with NSP8, suppress protein integration into the cell membrane, thereby disrupting host immune defenses. Its function is as follows. Plays a pivotal role in viral transcription by stimulating both nsp14 3'-5' exoribonuclease and nsp16 2'-O-methyltransferase activities. Therefore plays an essential role in viral mRNAs cap methylation. RNA-directed RNA polymerase that catalyzes the transcription of viral genomic and subgenomic RNAs. Acts in complex with nsp7 and nsp8 to transcribe both the minus and positive strands of genomic RNA. The kinase-like NiRAN domain of NSP12 attaches one or more nucleotides to the amino terminus of NSP9, forming a covalent RNA-protein intermediate that serves as transcription/replication primer. Subgenomic RNAs (sgRNAs) are formed by discontinuous transcription: The polymerase has the ability to pause at transcription-regulating sequences (TRS) and jump to the leader TRS, resulting in a major deletion. This creates a series of subgenomic RNAs that are replicated, transcribed and translated. In addition, Nsp12 is a subunit of the viral RNA capping enzyme that catalyzes the RNA guanylyltransferase reaction for genomic and sub-genomic RNAs. Subsequently, the NiRAN domain transfers RNA to GDP, and forms the core cap structure GpppA-RNA. In terms of biological role, multi-functional protein with a zinc-binding domain in N-terminus displaying RNA and DNA duplex-unwinding activities with 5' to 3' polarity. Activity of helicase is dependent on magnesium. Functionally, plays a role in viral RNA synthesis through two distinct activities. The N7-guanine methyltransferase activity plays a role in the formation of the cap structure GpppA-RNA. The proofreading exoribonuclease reduces the sensitivity of the virus to RNA mutagens during replication. This activity acts on both ssRNA and dsRNA in a 3'-5' direction. Its function is as follows. Plays a role in viral transcription/replication and prevents the simultaneous activation of host cell dsRNA sensors, such as MDA5/IFIH1, OAS, and PKR. Acts by degrading the 5'-polyuridines generated during replication of the poly(A) region of viral genomic and subgenomic RNAs. Catalyzes a two-step reaction in which a 2'3'-cyclic phosphate (2'3'-cP) is first generated by 2'-O transesterification, which is then hydrolyzed to a 3'-phosphate (3'-P). If not degraded, poly(U) RNA would hybridize with poly(A) RNA tails and activate host dsRNA sensors. Methyltransferase that mediates mRNA cap 2'-O-ribose methylation to the 5'-cap structure of viral mRNAs. N7-methyl guanosine cap is a prerequisite for binding of nsp16. Therefore plays an essential role in viral mRNAs cap methylation which is essential to evade immune system. This is Replicase polyprotein 1ab (rep) from Pipistrellus abramus (Japanese pipistrelle).